Reading from the N-terminus, the 114-residue chain is Iron-sulfur cluster insertion protein ErpA (114 aa).

Cys42, Cys106, and Cys108 together coordinate iron-sulfur cluster.

The protein belongs to the HesB/IscA family. As to quaternary structure, homodimer. Iron-sulfur cluster serves as cofactor.

Functionally, required for insertion of 4Fe-4S clusters for at least IspG. The polypeptide is Iron-sulfur cluster insertion protein ErpA (Salmonella typhi).